Reading from the N-terminus, the 255-residue chain is Hydroxyacylglutathione hydrolase (255 aa).

Residues His56, His58, Asp60, His61, His114, Asp133, and His171 each coordinate Zn(2+).

Belongs to the metallo-beta-lactamase superfamily. Glyoxalase II family. In terms of assembly, monomer. Zn(2+) serves as cofactor.

The enzyme catalyses an S-(2-hydroxyacyl)glutathione + H2O = a 2-hydroxy carboxylate + glutathione + H(+). The protein operates within secondary metabolite metabolism; methylglyoxal degradation; (R)-lactate from methylglyoxal: step 2/2. In terms of biological role, thiolesterase that catalyzes the hydrolysis of S-D-lactoyl-glutathione to form glutathione and D-lactic acid. The protein is Hydroxyacylglutathione hydrolase of Roseobacter denitrificans (strain ATCC 33942 / OCh 114) (Erythrobacter sp. (strain OCh 114)).